Reading from the N-terminus, the 342-residue chain is MASNSEKNPLLSDEKPKSTEENKSSKPESASGSSTSSAMPGLNFNAFDFSNMASILNDPSIREMAEQIAKDPAFNQLAEQLQRSIPNAGQEGGFPNFDPQQYVNTMQQVMHNPEFKTMAEKLGTALVQDPQMSPFLDAFSNPETAEHFTERMARMKEDPELKPILDEIDAGGPSAMMKYWNDPEVLKKLGEAMGMPVAGLPDQTVSAEPEVAEEGEEEESIVHQTASLGDVEGLKAALASGGNKDEEDSEGRTALHFACGYGELKCAQVLIDAGASVNAVDKNKNTPLHYAAGYGRKECVSLLLENGAAVTLQNLDEKTPIDVAKLNSQLEVVKLLEKDAFL.

Positions 1–41 are disordered; the sequence is MASNSEKNPLLSDEKPKSTEENKSSKPESASGSSTSSAMPG. Residues 12 to 26 are compositionally biased toward basic and acidic residues; the sequence is SDEKPKSTEENKSSK. The segment covering 27 to 37 has biased composition (low complexity); sequence PESASGSSTSS. 4 ANK repeats span residues 217-246, 250-279, 283-312, and 316-342; these read EEESIVHQTASLGDVEGLKAALASGGNKDE, EGRTALHFACGYGELKCAQVLIDAGASVNA, NKNTPLHYAAGYGRKECVSLLLENGAAVTL, and DEKTPIDVAKLNSQLEVVKLLEKDAFL. Residues H223 and E246 each coordinate a 1,2-diacyl-3-O-(beta-D-galactosyl)-sn-glycerol. A 1,2-diacyl-sn-glycero-3-phospho-(1'-sn-glycerol) contacts are provided by Y294 and R296.

As to quaternary structure, interacts with TOM20-4, CYTB5-E, CBR1, APX3, APX5, TOC34 and GRF6. Binds to chloroplast outer envelope membrane (OEM) protein targeting signals, as well as to chloroplasts. Interacts with OEP7. Binds to HSP17.8 via its ankyrin repeats, this interaction enhances chaperone activity and chloroplast binding. Also interacts with HSP17.4A, HSP17.6A and HSP18.1. Binds specifically to two chloroplast glycolipids, monogalactosyldiacylglycerol (MGDG) and phosphatidylglycerol (PG). As to expression, ubiquitously expressed at basal level.

It localises to the cytoplasm. It is found in the nucleus. The protein resides in the plastid. The protein localises to the chloroplast outer membrane. In terms of biological role, exhibits chaperone activity toward chloroplast outer envelope membrane, mitochondrion outer membrane, endoplasmic reticulum membrane and peroxisomal proteins, by recruiting specific proteins containing a single transmembrane associated with an AKR2A-binding sequence (ABS) and subsequently binding glycolipids (e.g. monogalactosyldiacylglycerol (MGDG) and phosphatidylglycerol (PG)) present in the membrane of the target organelle. Seems to be involved in the regulation of hydrogen peroxide levels during biotic and abiotic stresses by optimizing the ascorbate peroxidase 3 (APX3) hydrogen peroxide-degrading activity. This regulation might be monitored by GRF6. Cytosolic targeting factor for chloroplast outer membrane (COM) proteins that mediates sorting and targeting of nascent chloroplast outer envelope membrane (OEM) proteins to the chloroplast. Facilitates the targeting of OEP7 to chloroplasts. Facilitates the targeting of APX3 to peroxisomes. Involved in cellular metabolism (e.g. peroxisome activity) and required for plant growth and development. This is Ankyrin repeat domain-containing protein 2A from Arabidopsis thaliana (Mouse-ear cress).